Reading from the N-terminus, the 284-residue chain is Four and a half LIM domains protein 5 (284 aa).

A C4-type zinc finger spans residues 8–32 (CQYCTSSLIGKKYVLKDDNLYCISC). 3 consecutive LIM zinc-binding domains span residues 39–100 (NYCE…ECSS), 101–160 (KCFH…KEFA), and 161–220 (HYCN…LYAK).

Interacts with CREM (via the third LIM domain). Interacts (via second LIM domain) with SPAG8. As to expression, testis-specific, temporal expression is coordinated with CREM.

It localises to the nucleus. In terms of biological role, may be involved in the regulation of spermatogenesis. Stimulates CREM transcriptional activity in a phosphorylation-independent manner. This chain is Four and a half LIM domains protein 5 (Fhl5), found in Mus musculus (Mouse).